The sequence spans 433 residues: tRNA-2-methylthio-N(6)-dimethylallyladenosine synthase (433 aa).

Positions 3–118 constitute an MTTase N-terminal domain; it reads KKLFIQTLGC…ITKAVNTPKF (116 aa). Residues Cys12, Cys49, Cys81, Cys150, Cys154, and Cys157 each contribute to the [4Fe-4S] cluster site. Residues 136 to 369 enclose the Radical SAM core domain; that stretch reads RGSPYKSHIN…QNRHSEILDE (234 aa). The region spanning 372–433 is the TRAM domain; that stretch reads AAQKDKIFDV…RMVLYGELQI (62 aa).

It belongs to the methylthiotransferase family. MiaB subfamily. Monomer. It depends on [4Fe-4S] cluster as a cofactor.

The protein resides in the cytoplasm. The catalysed reaction is N(6)-dimethylallyladenosine(37) in tRNA + (sulfur carrier)-SH + AH2 + 2 S-adenosyl-L-methionine = 2-methylsulfanyl-N(6)-dimethylallyladenosine(37) in tRNA + (sulfur carrier)-H + 5'-deoxyadenosine + L-methionine + A + S-adenosyl-L-homocysteine + 2 H(+). In terms of biological role, catalyzes the methylthiolation of N6-(dimethylallyl)adenosine (i(6)A), leading to the formation of 2-methylthio-N6-(dimethylallyl)adenosine (ms(2)i(6)A) at position 37 in tRNAs that read codons beginning with uridine. This Campylobacter concisus (strain 13826) protein is tRNA-2-methylthio-N(6)-dimethylallyladenosine synthase.